The sequence spans 130 residues: Ribonuclease P protein component 2 (130 aa).

This sequence belongs to the eukaryotic/archaeal RNase P protein component 2 family. In terms of assembly, consists of a catalytic RNA component and at least 5 protein subunits.

The protein localises to the cytoplasm. It catalyses the reaction Endonucleolytic cleavage of RNA, removing 5'-extranucleotides from tRNA precursor.. Functionally, part of ribonuclease P, a protein complex that generates mature tRNA molecules by cleaving their 5'-ends. This Methanococcus maripaludis (strain DSM 14266 / JCM 13030 / NBRC 101832 / S2 / LL) protein is Ribonuclease P protein component 2.